The following is a 332-amino-acid chain: MSEPVLMDRFARKVDYLRMSVTDRCDFRCVYCMAEEMTFLPRQQILSLEEILQVAERFVALGTRKIRLTGGEPLVRSGVVGLCEKIAALPGLRELCMTTNGSQLDKLAAPLFKAGVTRLNISLDSLDPQRFRELTRTGDLHKVIAGIDAANAAGFVHTKLNCVVMHGRNDHEINDLLAFAIDRNLDVSFIEEMPLGIISEHSRAESFYSSDQVRERIAERYTLVPSTDSTQGPSRYWRLAEAPGIRIGFISPHSHNFCGTCNRVRLTVEGRLLLCLGNEHSVDLKAVLRANPGQPEKLEKAIIDAMQIKPWSHNFTHDDGVQVVRFMNMTGG.

Residues 9–220 form the Radical SAM core domain; that stretch reads RFARKVDYLR…DQVRERIAER (212 aa). R18 contacts GTP. The [4Fe-4S] cluster site is built by C25 and C29. Y31 lines the S-adenosyl-L-methionine pocket. C32 contributes to the [4Fe-4S] cluster binding site. Residue R67 coordinates GTP. G71 provides a ligand contact to S-adenosyl-L-methionine. Residue T98 participates in GTP binding. S122 lines the S-adenosyl-L-methionine pocket. K159 contributes to the GTP binding site. M193 contacts S-adenosyl-L-methionine. C258 and C261 together coordinate [4Fe-4S] cluster. 263-265 provides a ligand contact to GTP; the sequence is RVR. [4Fe-4S] cluster is bound at residue C275.

Belongs to the radical SAM superfamily. MoaA family. As to quaternary structure, monomer and homodimer. [4Fe-4S] cluster serves as cofactor.

It carries out the reaction GTP + AH2 + S-adenosyl-L-methionine = (8S)-3',8-cyclo-7,8-dihydroguanosine 5'-triphosphate + 5'-deoxyadenosine + L-methionine + A + H(+). Its pathway is cofactor biosynthesis; molybdopterin biosynthesis. Its function is as follows. Catalyzes the cyclization of GTP to (8S)-3',8-cyclo-7,8-dihydroguanosine 5'-triphosphate. The chain is GTP 3',8-cyclase from Pseudomonas savastanoi pv. phaseolicola (strain 1448A / Race 6) (Pseudomonas syringae pv. phaseolicola (strain 1448A / Race 6)).